The sequence spans 339 residues: Ketol-acid reductoisomerase (NADP(+)) (339 aa).

Residues Met-1–Thr-182 enclose the KARI N-terminal Rossmann domain. NADP(+) is bound by residues Tyr-24 to Gln-27, Lys-48, Ser-51, Thr-53, and Asp-83 to Gln-86. Residue His-108 is part of the active site. Gly-134 is a binding site for NADP(+). In terms of domain architecture, KARI C-terminal knotted spans Asn-183–Ile-328. Mg(2+)-binding residues include Asp-191, Glu-195, Glu-227, and Glu-231. Ser-252 serves as a coordination point for substrate.

This sequence belongs to the ketol-acid reductoisomerase family. Mg(2+) is required as a cofactor.

The catalysed reaction is (2R)-2,3-dihydroxy-3-methylbutanoate + NADP(+) = (2S)-2-acetolactate + NADPH + H(+). It carries out the reaction (2R,3R)-2,3-dihydroxy-3-methylpentanoate + NADP(+) = (S)-2-ethyl-2-hydroxy-3-oxobutanoate + NADPH + H(+). It functions in the pathway amino-acid biosynthesis; L-isoleucine biosynthesis; L-isoleucine from 2-oxobutanoate: step 2/4. Its pathway is amino-acid biosynthesis; L-valine biosynthesis; L-valine from pyruvate: step 2/4. Its function is as follows. Involved in the biosynthesis of branched-chain amino acids (BCAA). Catalyzes an alkyl-migration followed by a ketol-acid reduction of (S)-2-acetolactate (S2AL) to yield (R)-2,3-dihydroxy-isovalerate. In the isomerase reaction, S2AL is rearranged via a Mg-dependent methyl migration to produce 3-hydroxy-3-methyl-2-ketobutyrate (HMKB). In the reductase reaction, this 2-ketoacid undergoes a metal-dependent reduction by NADPH to yield (R)-2,3-dihydroxy-isovalerate. This chain is Ketol-acid reductoisomerase (NADP(+)), found in Rhizobium rhizogenes (strain K84 / ATCC BAA-868) (Agrobacterium radiobacter).